We begin with the raw amino-acid sequence, 609 residues long: MCGIVGAIAQRDVAEILLEGLRRLEYRGYDSAGLAVVDAEGHMTRLRRLGKVQMLAQAAEEHPLHGGTGIAHTRWATHGEPSEANAHPHVSEHIVVVHNGIIENHEPLREALKARGYTFVSETDTEVIAHLVNWELKQGGTLREAVLRAIPQLRGAYGTVIMDSRHPDTLLAARSGSPLVIGLGMGENFIASDQLALLPVTRRFIFLEEGDIAEITRRSVNIFDKTGAEVKRQDIESNLQYDAGDKGIYRHYMQKEIYEQPNAIKNTLTGRISHGQVDLSELGPNADELLSKVEHIQILACGTSYNSGMVSRYWFESLAGIPCDVEIASEFRYRKSAVRRNSLMITLSQSGETADTLAGLRLSKELGYLGSLAICNVPGSSLVRESDLALMTNAGTEIGVASTKAFTTQLTVLLMLVAKLSRLKGLDASIEHDIVHGLQALPSRIEQMLSQDKRIEALAEDFSDKHHALFLGRGDQYPIALEGALKLKEISYIHAEAYAAGELKHGPLALIDADMPVIVVAPNNELLEKLKSNIEEVRARGGQLYVFADQDAGFVGSDNMHIIEMPHVEEVIAPIFYTVPLQLLAYHVALIKGTDVDQPRNLAKSVTVE.

Catalysis depends on C2, which acts as the Nucleophile; for GATase activity. Positions 2 to 218 (CGIVGAIAQR…EGDIAEITRR (217 aa)) constitute a Glutamine amidotransferase type-2 domain. SIS domains are found at residues 286 to 426 (ADEL…LKGL) and 458 to 599 (LAED…VDQP). The active-site For Fru-6P isomerization activity is K604.

Homodimer.

It localises to the cytoplasm. It catalyses the reaction D-fructose 6-phosphate + L-glutamine = D-glucosamine 6-phosphate + L-glutamate. Functionally, catalyzes the first step in hexosamine metabolism, converting fructose-6P into glucosamine-6P using glutamine as a nitrogen source. The sequence is that of Glutamine--fructose-6-phosphate aminotransferase [isomerizing] from Escherichia coli O6:H1 (strain CFT073 / ATCC 700928 / UPEC).